A 112-amino-acid polypeptide reads, in one-letter code: Ribonuclease P protein component (112 aa).

It belongs to the RnpA family. Consists of a catalytic RNA component (M1 or rnpB) and a protein subunit.

The enzyme catalyses Endonucleolytic cleavage of RNA, removing 5'-extranucleotides from tRNA precursor.. Functionally, RNaseP catalyzes the removal of the 5'-leader sequence from pre-tRNA to produce the mature 5'-terminus. It can also cleave other RNA substrates such as 4.5S RNA. The protein component plays an auxiliary but essential role in vivo by binding to the 5'-leader sequence and broadening the substrate specificity of the ribozyme. In Mycoplasmopsis synoviae (strain 53) (Mycoplasma synoviae), this protein is Ribonuclease P protein component.